The primary structure comprises 813 residues: Protein SBE22 (813 aa).

3 disordered regions span residues 1–66 (MIRP…HGHA), 107–240 (EIFS…GEFG), and 331–359 (QKDS…NRES). The segment covering 56–66 (RPSDNLFHGHA) has biased composition (basic and acidic residues). Positions 107 to 121 (EIFSTSSSDTQSNIS) are enriched in low complexity. Positions 127–138 (SEDHSFGMDKSV) are enriched in basic and acidic residues. 3 stretches are compositionally biased toward polar residues: residues 139–160 (DNSS…NGDS), 169–200 (VSVN…NRSM), and 214–234 (KNSS…NRSV).

It belongs to the SBE2 family.

It is found in the cytoplasm. It localises to the golgi apparatus. Its function is as follows. With SBE2, is involved in cell wall integrity and polarity processes like bud growth. This chain is Protein SBE22 (SBE22), found in Candida glabrata (strain ATCC 2001 / BCRC 20586 / JCM 3761 / NBRC 0622 / NRRL Y-65 / CBS 138) (Yeast).